The chain runs to 279 residues: Secreted RxLR effector protein 90 (279 aa).

The N-terminal stretch at 1–19 (MKSAAAFATFLTLSVFVAT) is a signal peptide. The RxLR-dEER motif lies at 29–46 (RGLRSLADNQSTESSEGR). Disordered regions lie at residues 29–53 (RGLRSLADNQSTESSEGRKDHYNHH) and 135–176 (ATPA…NLAG). Asn37 is a glycosylation site (N-linked (GlcNAc...) asparagine). Residues 135 to 146 (ATPAPTTSVPSS) show a composition bias toward low complexity. Residues 147–163 (LVNTDTSDNQLPTTPVA) are compositionally biased toward polar residues. Residues 166–176 (QGGGIGSNLAG) show a composition bias toward gly residues. An N-linked (GlcNAc...) asparagine glycan is attached at Asn217.

The protein belongs to the RxLR effector family.

It localises to the secreted. The protein resides in the host cell membrane. In terms of biological role, secreted effector that completely suppresses the host cell death induced by cell death-inducing proteins. This is Secreted RxLR effector protein 90 from Plasmopara viticola (Downy mildew of grapevine).